We begin with the raw amino-acid sequence, 239 residues long: Tetratricopeptide repeat protein 9B (239 aa).

2 disordered regions span residues 1–57 and 99–126; these read MQRG…LGAA and QGAR…SEEQ. A phosphoserine mark is found at serine 7 and serine 27. Positions 16–31 are enriched in pro residues; that stretch reads PEPPPRPPPALSPPGS. The stretch at 65 to 99 is one TPR 1 repeat; the sequence is AVAFKAEGQRCYREKKFREAIGKYHRALLQLKAAQ. Pro residues predominate over residues 106–116; it reads LPAPAPGPTSS. The stretch at 171 to 204 is one TPR 2 repeat; sequence FKATYRAGIAFYHLGDYARALRYLQEARSREPTD.

It belongs to the TTC9 family.

The polypeptide is Tetratricopeptide repeat protein 9B (TTC9B) (Homo sapiens (Human)).